A 549-amino-acid chain; its full sequence is Chaperonin GroEL (549 aa).

Residues 29 to 32, lysine 50, 86 to 90, glycine 413, 479 to 481, and aspartate 496 contribute to the ATP site; these read TLGP, DGTTT, and NAA. The disordered stretch occupies residues 522-549; the sequence is VSDKPEKPQQGGQGGGGMGGGDMGGMDF. Residues 532–549 show a composition bias toward gly residues; sequence GGQGGGGMGGGDMGGMDF.

This sequence belongs to the chaperonin (HSP60) family. Forms a cylinder of 14 subunits composed of two heptameric rings stacked back-to-back. Interacts with the co-chaperonin GroES.

It is found in the cytoplasm. The enzyme catalyses ATP + H2O + a folded polypeptide = ADP + phosphate + an unfolded polypeptide.. In terms of biological role, together with its co-chaperonin GroES, plays an essential role in assisting protein folding. The GroEL-GroES system forms a nano-cage that allows encapsulation of the non-native substrate proteins and provides a physical environment optimized to promote and accelerate protein folding. In Deinococcus deserti (strain DSM 17065 / CIP 109153 / LMG 22923 / VCD115), this protein is Chaperonin GroEL.